The primary structure comprises 214 residues: Thiamine-phosphate synthase (214 aa).

4-amino-2-methyl-5-(diphosphooxymethyl)pyrimidine-binding positions include 37–41 (QYREK) and Asn-73. Mg(2+) contacts are provided by Asp-74 and Asp-93. Residue Ser-112 coordinates 4-amino-2-methyl-5-(diphosphooxymethyl)pyrimidine. Position 139–141 (139–141 (TIS)) interacts with 2-[(2R,5Z)-2-carboxy-4-methylthiazol-5(2H)-ylidene]ethyl phosphate. Lys-142 is a binding site for 4-amino-2-methyl-5-(diphosphooxymethyl)pyrimidine. 2-[(2R,5Z)-2-carboxy-4-methylthiazol-5(2H)-ylidene]ethyl phosphate is bound by residues Gly-171 and 191–192 (IS).

Belongs to the thiamine-phosphate synthase family. Requires Mg(2+) as cofactor.

The enzyme catalyses 2-[(2R,5Z)-2-carboxy-4-methylthiazol-5(2H)-ylidene]ethyl phosphate + 4-amino-2-methyl-5-(diphosphooxymethyl)pyrimidine + 2 H(+) = thiamine phosphate + CO2 + diphosphate. The catalysed reaction is 2-(2-carboxy-4-methylthiazol-5-yl)ethyl phosphate + 4-amino-2-methyl-5-(diphosphooxymethyl)pyrimidine + 2 H(+) = thiamine phosphate + CO2 + diphosphate. It catalyses the reaction 4-methyl-5-(2-phosphooxyethyl)-thiazole + 4-amino-2-methyl-5-(diphosphooxymethyl)pyrimidine + H(+) = thiamine phosphate + diphosphate. It participates in cofactor biosynthesis; thiamine diphosphate biosynthesis; thiamine phosphate from 4-amino-2-methyl-5-diphosphomethylpyrimidine and 4-methyl-5-(2-phosphoethyl)-thiazole: step 1/1. In terms of biological role, condenses 4-methyl-5-(beta-hydroxyethyl)thiazole monophosphate (THZ-P) and 2-methyl-4-amino-5-hydroxymethyl pyrimidine pyrophosphate (HMP-PP) to form thiamine monophosphate (TMP). The polypeptide is Thiamine-phosphate synthase (Listeria monocytogenes serotype 4b (strain CLIP80459)).